The chain runs to 211 residues: Ras-related protein Rab-38 (211 aa).

The GTP site is built by G19, V20, G21, K22, T23, S24, S35, S36, Y38, and T41. T23 lines the Mg(2+) pocket. The Switch 1 motif lies at 32-46 (QNFSSHYRATIGVDF). Residues T41 and D65 each coordinate Mg(2+). GTP-binding residues include G68, K128, D130, A160, and K161. Residues 68 to 81 (GQERFGNMTRVYYR) carry the Switch 2 motif. C205 is lipidated: S-palmitoyl cysteine. Residue C208 is the site of S-geranylgeranyl cysteine attachment.

Belongs to the small GTPase superfamily. Rab family. Interacts with ANKRD27. Mg(2+) serves as cofactor.

It is found in the cell membrane. The protein localises to the cytoplasmic vesicle. Its subcellular location is the phagosome. It localises to the phagosome membrane. The protein resides in the melanosome. It is found in the melanosome membrane. It carries out the reaction GTP + H2O = GDP + phosphate + H(+). Its activity is regulated as follows. Regulated by guanine nucleotide exchange factors (GEFs) including the BLOC-3 complex composed of HPS1 and HPS4 which promote the exchange of bound GDP for free GTP. Regulated by GTPase activating proteins (GAPs) including SGSM2 which increase the GTP hydrolysis activity. Inhibited by GDP dissociation inhibitors (GDIs). Functionally, the small GTPases Rab are key regulators of intracellular membrane trafficking, from the formation of transport vesicles to their fusion with membranes. Rabs cycle between an inactive GDP-bound form and an active GTP-bound form that is able to recruit to membranes different sets of downstream effectors directly responsible for vesicle formation, movement, tethering and fusion. RAB38 plays a role in the maturation of phagosomes that engulf pathogens, such as S.aureus and Mycobacterium. May be involved in melanosomal transport and docking. Involved in the proper sorting of TYRP1. Involved in peripheral melanosomal distribution of TYRP1 in melanocytes; the function, which probably is implicating vesicle-trafficking, includes cooperation with ANKRD27 and VAMP7. Plays an important role in the control of melanin production and melanosome biogenesis. In concert with RAB32, regulates the proper trafficking of melanogenic enzymes TYR, TYRP1 and DCT/TYRP2 to melanosomes in melanocytes. In Mus musculus (Mouse), this protein is Ras-related protein Rab-38.